We begin with the raw amino-acid sequence, 338 residues long: MKVFYDKDADLSLIKGKNVTIIGYGSQGHAHALNLKDSGVNVTVGLRKSGASWNKAVNAGLQVKEVAEAVKGADVVMILLPDEQIADVYKNEVHDNIKAGAALAFAHGFNVHYGAVVPRADVDVIMIAPKAPGHTVRATYTQGGGVPHLIAVYQDKSGSARDVALSYATANGGGRAGIIETNFREETETDLFGEQAVLCGGTVELIKAGFETLVEAGYAPEMAYFECLHELKLIVDLIYEGGIANMNYSISNNAEYGEYVTGPRIVTEETKKAMKQCLKDIQTGEYAKSFLLENKAGAPTLSSRRRLNAEHQIEVVGEKLRAMMPWIAKNKMVDQSKN.

One can recognise a KARI N-terminal Rossmann domain in the interval 1–181 (MKVFYDKDAD…GGGRAGIIET (181 aa)). NADP(+) contacts are provided by residues 24–27 (YGSQ), Arg47, and Ser52. Residue His107 is part of the active site. Residue Gly133 participates in NADP(+) binding. Residues 182 to 327 (NFREETETDL…EKLRAMMPWI (146 aa)) form the KARI C-terminal knotted domain. Residues Asp190, Glu194, Glu226, and Glu230 each coordinate Mg(2+). Ser251 is a binding site for substrate.

This sequence belongs to the ketol-acid reductoisomerase family. It depends on Mg(2+) as a cofactor.

The catalysed reaction is (2R)-2,3-dihydroxy-3-methylbutanoate + NADP(+) = (2S)-2-acetolactate + NADPH + H(+). It carries out the reaction (2R,3R)-2,3-dihydroxy-3-methylpentanoate + NADP(+) = (S)-2-ethyl-2-hydroxy-3-oxobutanoate + NADPH + H(+). Its pathway is amino-acid biosynthesis; L-isoleucine biosynthesis; L-isoleucine from 2-oxobutanoate: step 2/4. It participates in amino-acid biosynthesis; L-valine biosynthesis; L-valine from pyruvate: step 2/4. Involved in the biosynthesis of branched-chain amino acids (BCAA). Catalyzes an alkyl-migration followed by a ketol-acid reduction of (S)-2-acetolactate (S2AL) to yield (R)-2,3-dihydroxy-isovalerate. In the isomerase reaction, S2AL is rearranged via a Mg-dependent methyl migration to produce 3-hydroxy-3-methyl-2-ketobutyrate (HMKB). In the reductase reaction, this 2-ketoacid undergoes a metal-dependent reduction by NADPH to yield (R)-2,3-dihydroxy-isovalerate. The sequence is that of Ketol-acid reductoisomerase (NADP(+)) from Cupriavidus pinatubonensis (strain JMP 134 / LMG 1197) (Cupriavidus necator (strain JMP 134)).